Reading from the N-terminus, the 557-residue chain is Carotenoid-cleaving dioxygenase, mitochondrial (557 aa).

Histidine 203, histidine 263, histidine 334, and histidine 551 together coordinate Fe cation.

This sequence belongs to the carotenoid oxygenase family. Fe(2+) is required as a cofactor.

It localises to the mitochondrion. The enzyme catalyses all-trans-beta-carotene + O2 = beta-ionone + all-trans-10'-apo-beta-carotenal. It carries out the reaction 5-cis-lycopene + O2 = 5-cis-10'-apo-lycopenal + (3E,5E)-6,10-dimethylundeca-3,5,9-trien-2-one. It catalyses the reaction 13-cis-lycopene + O2 = 13-cis-10'-apo-lycopenal + (3E,5E)-6,10-dimethylundeca-3,5,9-trien-2-one. The catalysed reaction is lutein + O2 = (3R,6R)-hydroxy-alpha-ionone + (3R)-3-hydroxy-10'-apo-beta-carotenal. The enzyme catalyses lutein + O2 = (3R,6R)-3-hydroxy-10'-apo-alpha-carotenal + (3R)-hydroxy-beta-ionone. It carries out the reaction all-trans-zeaxanthin + 2 O2 = 4,9-dimethyldodeca-2,4,6,8,10-pentaenedial + 2 (3R)-hydroxy-beta-ionone. It catalyses the reaction all-trans-zeaxanthin + O2 = (3R)-3-hydroxy-10'-apo-beta-carotenal + (3R)-hydroxy-beta-ionone. The catalysed reaction is beta-cryptoxanthin + O2 = all-trans-10'-apo-beta-carotenal + (3R)-hydroxy-beta-ionone. The enzyme catalyses all-trans-10'-apo-beta-carotenal + O2 = beta-ionone + 4,9-dimethyldodeca-2,4,6,8,10-pentaenedial. It carries out the reaction (3R)-3-hydroxy-10'-apo-beta-carotenal + O2 = 4,9-dimethyldodeca-2,4,6,8,10-pentaenedial + (3R)-hydroxy-beta-ionone. It catalyses the reaction (3R,6R)-3-hydroxy-10'-apo-alpha-carotenal + O2 = (3R,6R)-hydroxy-alpha-ionone + 4,9-dimethyldodeca-2,4,6,8,10-pentaenedial. Its function is as follows. Broad specificity mitochondrial dioxygenase that mediates the asymmetric oxidative cleavage of carotenoids. Cleaves carotenes (pure hydrocarbon carotenoids) such as all-trans-beta-carotene and lycopene as well as xanthophylls (oxygenated carotenoids) such as zeaxanthin, lutein and beta-cryptoxanthin at both the 9,10 and the 9',10' carbon-carbon double bond. Through its function in carotenoids metabolism regulates oxidative stress and the production of important signaling molecules. The protein is Carotenoid-cleaving dioxygenase, mitochondrial of Pongo abelii (Sumatran orangutan).